A 1402-amino-acid chain; its full sequence is DNA-directed RNA polymerase subunit beta' (1402 aa).

Positions 70, 72, 85, and 88 each coordinate Zn(2+). Mg(2+) is bound by residues D460, D462, and D464. The Zn(2+) site is built by C812, C886, C893, and C896. The segment at 1373-1402 is disordered; it reads DRFLNGSASSNEKSRSAGVLEATDEESAGD.

Belongs to the RNA polymerase beta' chain family. In terms of assembly, the RNAP catalytic core consists of 2 alpha, 1 beta, 1 beta' and 1 omega subunit. When a sigma factor is associated with the core the holoenzyme is formed, which can initiate transcription. The cofactor is Mg(2+). It depends on Zn(2+) as a cofactor.

It catalyses the reaction RNA(n) + a ribonucleoside 5'-triphosphate = RNA(n+1) + diphosphate. Its function is as follows. DNA-dependent RNA polymerase catalyzes the transcription of DNA into RNA using the four ribonucleoside triphosphates as substrates. This Dichelobacter nodosus (strain VCS1703A) protein is DNA-directed RNA polymerase subunit beta'.